We begin with the raw amino-acid sequence, 389 residues long: tRNA-specific 2-thiouridylase MnmA (389 aa).

Residues alanine 21–serine 28 and leucine 47 each bind ATP. Cysteine 115 acts as the Nucleophile in catalysis. An intrachain disulfide couples cysteine 115 to cysteine 212. Glycine 139 provides a ligand contact to ATP. The segment at arginine 162–glutamine 164 is interaction with tRNA. Cysteine 212 acts as the Cysteine persulfide intermediate in catalysis.

It belongs to the MnmA/TRMU family.

The protein localises to the cytoplasm. It catalyses the reaction S-sulfanyl-L-cysteinyl-[protein] + uridine(34) in tRNA + AH2 + ATP = 2-thiouridine(34) in tRNA + L-cysteinyl-[protein] + A + AMP + diphosphate + H(+). Catalyzes the 2-thiolation of uridine at the wobble position (U34) of tRNA, leading to the formation of s(2)U34. This is tRNA-specific 2-thiouridylase MnmA from Xanthobacter autotrophicus (strain ATCC BAA-1158 / Py2).